Consider the following 372-residue polypeptide: F-box protein AFR (372 aa).

Residues 1 to 15 (MAEQETTSNINTIND) show a composition bias toward polar residues. The segment at 1–27 (MAEQETTSNINTINDQAEEETRTKSQP) is disordered. One can recognise an F-box domain in the interval 29–74 (ISGLPNDIAELCLLRLPYPYHALYRSVSSSWNKTITNPRFLFSKQS). 5 Kelch repeats span residues 80-126 (PYLF…HALS), 135-178 (KLFV…NVNG), 179-227 (KIMA…VIGK), 229-276 (MCVT…IRDR), and 279-325 (VISE…DRVF).

Part of a SCF (ASK-cullin-F-box) protein ligase complex. Interacts with SKP1A.

It participates in protein modification; protein ubiquitination. In terms of biological role, component of SCF (ASK-cullin-F-box) E3 ubiquitin ligase complexes, which may mediate the ubiquitination and subsequent proteasomal degradation of target proteins. Part of the phyA-mediated signaling transduction pathway leading to the regulation of gene expression and hypocotyls elongation in response to red and far-red light exposure. The polypeptide is F-box protein AFR (AFR) (Arabidopsis thaliana (Mouse-ear cress)).